The chain runs to 403 residues: MNKKVNVNKVVVAYSGGLDTSVIIPWLKENYDCEVIAFVADVGQGAEELEGIEAKAIASGASECYVADLKEEMVSEYIFPTLKTGALYEGKYLLGTSMARPIIAKAQVEVARNVGADALCHGCTGKGNDQIRFEGAFAALAPDLHVIAPWREWDLVSREECLDYLAERNIPCTASLTKIYSRDANAWHISTEGGVLEDTWNEPNEDCWAWTVDPEQAPNESETVSIKVEKGAVVAVDGKAMTPYEVVVYLNEKGIKHGVGRIDIVENRLVGMKSRGCYETPGGTIINEALRAVEQLVLDKASFEFREELGIKASHLVYDGRWFTPLCKSILAATEELAQDVNGDVVIKLYKGQATVTQKRSDNSLYSEEFATFGADEVYDQSHAEGFIRLYSLSSRIRALNSK.

ATP is bound by residues alanine 13–serine 21 and alanine 40. L-citrulline is bound by residues tyrosine 92 and serine 97. Glycine 122 provides a ligand contact to ATP. Residues threonine 124, asparagine 128, and aspartate 129 each coordinate L-aspartate. Asparagine 128 serves as a coordination point for L-citrulline. Positions 132, 181, 190, 266, and 278 each coordinate L-citrulline.

The protein belongs to the argininosuccinate synthase family. Type 1 subfamily. In terms of assembly, homotetramer.

It localises to the cytoplasm. The enzyme catalyses L-citrulline + L-aspartate + ATP = 2-(N(omega)-L-arginino)succinate + AMP + diphosphate + H(+). It participates in amino-acid biosynthesis; L-arginine biosynthesis; L-arginine from L-ornithine and carbamoyl phosphate: step 2/3. The protein is Argininosuccinate synthase of Aliivibrio salmonicida (strain LFI1238) (Vibrio salmonicida (strain LFI1238)).